The following is a 122-amino-acid chain: Non-specific lipid-transfer protein (122 aa).

The first 19 residues, 1-19, serve as a signal peptide directing secretion; it reads MGVSRACFVVMVVVYMVVA. The propeptide occupies 20–29; it reads ATPNVKLAEA. 4 disulfides stabilise this stretch: C32/C81, C42/C58, C59/C104, and C79/C118.

Monomer.

Functionally, plant non-specific lipid-transfer proteins transfer phospholipids as well as galactolipids across membranes. May play a role in wax or cutin deposition in the cell walls of expanding epidermal cells and certain secretory tissues. Binds saturated fatty acids, unsaturated fatty acids, lysolipids and, with highest efficiency, jasmonic acid. Has weak antimicrobial activity against fungi. Inhibits spore germination and hyphae elongation in A.niger VKM F-2259 and N.crassa VKM F-184. Has no antibacterial activity against A.tumefaciens A281, C.michiganensis VKM Ac-144 and P.syringae VKM B-1546. This chain is Non-specific lipid-transfer protein, found in Anethum graveolens (Dill).